We begin with the raw amino-acid sequence, 854 residues long: Fibroblast growth factor receptor 1 (854 aa).

The first 20 residues, 1–20 (MSGLFFLLSELLILLGKINS), serve as a signal peptide directing secretion. Topologically, residues 21–383 (VSKKSLCHPE…NFFMNSVPLS (363 aa)) are extracellular. One can recognise an Ig-like C2-type 1 domain in the interval 29–120 (PELFKIDNKL…SSVFFLINVT (92 aa)). Cys50 and Cys102 are joined by a disulfide. Asn95, Asn99, Asn110, Asn118, Asn140, Asn175, Asn202, Asn248, Asn283, Asn317, and Asn346 each carry an N-linked (GlcNAc...) asparagine glycan. Ig-like C2-type domains are found at residues 147–259 (PEMG…FTFT) and 268–369 (PHLT…LSVI). A disulfide bridge connects residues Cys166 and Cys242. Cys288 and Cys353 are disulfide-bonded. A helical transmembrane segment spans residues 384 to 404 (IFLVIGFFVAIILLSLIIYCF). The Cytoplasmic segment spans residues 405–854 (FLQYKNAVDS…SDYLEPKCLV (450 aa)). Positions 551 to 822 (KITNKKLGEG…EIVEILIDII (272 aa)) constitute a Protein kinase domain. ATP contacts are provided by residues 557–565 (LGEGAFGMV) and Lys585. The active-site Proton acceptor is the Asp689. Phosphotyrosine; by autocatalysis is present on Tyr718.

Belongs to the protein kinase superfamily. Tyr protein kinase family. Fibroblast growth factor receptor subfamily. Expressed in brain, stem cells and the mesenchymal cells.

Its subcellular location is the membrane. The catalysed reaction is L-tyrosyl-[protein] + ATP = O-phospho-L-tyrosyl-[protein] + ADP + H(+). Its function is as follows. Receptor for basic fibroblast growth factor. The sequence is that of Fibroblast growth factor receptor 1 (FGFR1) from Dugesia japonica (Planarian).